The sequence spans 406 residues: Tyrosine--tRNA ligase (406 aa).

The 'HIGH' region motif lies at 48–57 (PSRPDLHLGH). A 'KMSKS' region motif is present at residues 232 to 236 (KMSKS). K235 contributes to the ATP binding site. In terms of domain architecture, S4 RNA-binding spans 339-401 (MPVVELLMAL…GKRKFFKVAR (63 aa)).

The protein belongs to the class-I aminoacyl-tRNA synthetase family. TyrS type 2 subfamily. Homodimer.

It localises to the cytoplasm. The catalysed reaction is tRNA(Tyr) + L-tyrosine + ATP = L-tyrosyl-tRNA(Tyr) + AMP + diphosphate + H(+). Functionally, catalyzes the attachment of tyrosine to tRNA(Tyr) in a two-step reaction: tyrosine is first activated by ATP to form Tyr-AMP and then transferred to the acceptor end of tRNA(Tyr). This Chlorobaculum tepidum (strain ATCC 49652 / DSM 12025 / NBRC 103806 / TLS) (Chlorobium tepidum) protein is Tyrosine--tRNA ligase.